Reading from the N-terminus, the 195-residue chain is Probable GTP-binding protein EngB (195 aa).

Positions 22–195 constitute an EngB-type G domain; that stretch reads GLPEIALAGR…WNAILAKINK (174 aa). GTP contacts are provided by residues 30 to 37, 57 to 61, 75 to 78, 142 to 145, and 174 to 176; these read GRSNVGKS, GKTQT, DVPG, TKAD, and FSS. 2 residues coordinate Mg(2+): S37 and T59.

This sequence belongs to the TRAFAC class TrmE-Era-EngA-EngB-Septin-like GTPase superfamily. EngB GTPase family. The cofactor is Mg(2+).

Its function is as follows. Necessary for normal cell division and for the maintenance of normal septation. In Bacillus pumilus (strain SAFR-032), this protein is Probable GTP-binding protein EngB.